A 146-amino-acid chain; its full sequence is Hemoglobin subunit beta (146 aa).

In terms of domain architecture, Globin spans Phe2 to His146. Residue Ser44 is modified to Phosphoserine. N6-acetyllysine is present on Lys59. His63 lines the heme b pocket. Lys82 carries the N6-acetyllysine modification. His92 lines the heme b pocket. Residue Cys93 is modified to S-nitrosocysteine.

The protein belongs to the globin family. As to quaternary structure, heterotetramer of two alpha chains and two beta chains. As to expression, red blood cells.

Functionally, involved in oxygen transport from the lung to the various peripheral tissues. This Paguma larvata (Masked palm civet) protein is Hemoglobin subunit beta (HBB).